A 450-amino-acid polypeptide reads, in one-letter code: Ribosomal protein uS12 methylthiotransferase RimO (450 aa).

The region spanning 7–123 (QKVSMVSLGC…IAEILAEKSG (117 aa)) is the MTTase N-terminal domain. 6 residues coordinate [4Fe-4S] cluster: cysteine 16, cysteine 52, cysteine 86, cysteine 161, cysteine 165, and cysteine 168. Residues 147-377 (SSPAWFSYLK…MRIQARLSFK (231 aa)) enclose the Radical SAM core domain. The TRAM domain maps to 380–448 (RELIGTTEQV…DYDLIGEIQE (69 aa)).

Belongs to the methylthiotransferase family. RimO subfamily. It depends on [4Fe-4S] cluster as a cofactor.

The protein localises to the cytoplasm. The enzyme catalyses L-aspartate(89)-[ribosomal protein uS12]-hydrogen + (sulfur carrier)-SH + AH2 + 2 S-adenosyl-L-methionine = 3-methylsulfanyl-L-aspartate(89)-[ribosomal protein uS12]-hydrogen + (sulfur carrier)-H + 5'-deoxyadenosine + L-methionine + A + S-adenosyl-L-homocysteine + 2 H(+). Its function is as follows. Catalyzes the methylthiolation of an aspartic acid residue of ribosomal protein uS12. This Pelobacter propionicus (strain DSM 2379 / NBRC 103807 / OttBd1) protein is Ribosomal protein uS12 methylthiotransferase RimO.